We begin with the raw amino-acid sequence, 830 residues long: V-type proton ATPase 116 kDa subunit a 3 (830 aa).

Topologically, residues 1–385 (MGSMFRSEEV…DAYGVGRYQE (385 aa)) are cytoplasmic. The disordered stretch occupies residues 139-158 (QLAAAHTDGASERTPLLQAP). Residues 386-404 (VNPAPYTIITFPFLFAVMF) form a helical membrane-spanning segment. Residues 405-406 (GD) are Vacuolar-facing. The helical transmembrane segment at 407–423 (VGHGLLMFLFALAMVLA) threads the bilayer. The Cytoplasmic segment spans residues 424–438 (ENRPAVKAAQNEIWQ). A helical transmembrane segment spans residues 439–468 (TFFRGRYLLLLMGLFSIYTGFIYNECFSRA). Over 469-532 (TSIFPSGWSV…AANHLSFLNS (64 aa)) the chain is Vacuolar. The helical transmembrane segment at 533–552 (FKMKMSVILGVVHMAFGVVL) threads the bilayer. Topologically, residues 553–570 (GVFNHVHFGQRHRLLLET) are cytoplasmic. Residues 571–591 (LPELTFLLGLFGYLVFLVIYK) traverse the membrane as a helical segment. Over 592–635 (WLCVWAARAASAPSILIHFINMFLFSHSPSNRLLYPRQEVVQAT) the chain is Vacuolar. The chain crosses the membrane as a helical span at residues 636–655 (LVVLALAMVPILLLGTPLHL). The Cytoplasmic portion of the chain corresponds to 656 to 720 (LHRHRRRLRR…EVLMHQAIHT (65 aa)). The segment at 681–701 (LPDASVNGWSSDEEKAGGLDD) is disordered. Residues 721–745 (IEFCLGCVSNTASYLRLWALSLAHA) form a helical membrane-spanning segment. The Vacuolar portion of the chain corresponds to 746 to 766 (QLSEVLWAMVMRIGLGLGREV). A helical membrane pass occupies residues 767–807 (GVAAVVLVPIFAAFAVMTVAILLVMEGLSAFLHALRLHWVE). Residues 808 to 830 (FQNKFYSGTGYKLSPFTFAATDD) lie on the Cytoplasmic side of the membrane.

Belongs to the V-ATPase 116 kDa subunit family. As to quaternary structure, V-ATPase is a heteromultimeric enzyme made up of two complexes: the ATP-hydrolytic V1 complex and the proton translocation V0 complex. The V1 complex consists of three catalytic AB heterodimers that form a heterohexamer, three peripheral stalks each consisting of EG heterodimers, one central rotor including subunits D and F, and the regulatory subunits C and H. The proton translocation complex V0 consists of the proton transport subunit a, a ring of proteolipid subunits c9c'', rotary subunit d, subunits e and f, and the accessory subunits ATP6AP1/Ac45 and ATP6AP2/PRR. Isoform long is highly expressed in osteoclastomas. Isoform short is highly expressed in thymus.

Its subcellular location is the membrane. Functionally, subunit of the V0 complex of vacuolar(H+)-ATPase (V-ATPase), a multisubunit enzyme composed of a peripheral complex (V1) that hydrolyzes ATP and a membrane integral complex (V0) that translocates protons. V-ATPase is responsible for acidifying and maintaining the pH of intracellular compartments and in some cell types, is targeted to the plasma membrane, where it is responsible for acidifying the extracellular environment. Seems to be directly involved in T-cell activation. The sequence is that of V-type proton ATPase 116 kDa subunit a 3 (TCIRG1) from Homo sapiens (Human).